The chain runs to 289 residues: ATP synthase subunit a (289 aa).

A run of 6 helical transmembrane segments spans residues 43-63 (AFHVDTLGWSVALGLIFVLIF), 101-121 (SAVIAPLALTIFVWVFLMNAV), 160-180 (LSVFALIIFYSIKVKGIGGFI), 193-213 (LFVQALLIPVNFLLEFVTLIA), 232-252 (VFILIAVMFGSGLLWLSGLGV), and 259-279 (AVFHILIITLQAFIFMMLTIV).

It belongs to the ATPase A chain family. In terms of assembly, F-type ATPases have 2 components, CF(1) - the catalytic core - and CF(0) - the membrane proton channel. CF(1) has five subunits: alpha(3), beta(3), gamma(1), delta(1), epsilon(1). CF(0) has three main subunits: a(1), b(2) and c(9-12). The alpha and beta chains form an alternating ring which encloses part of the gamma chain. CF(1) is attached to CF(0) by a central stalk formed by the gamma and epsilon chains, while a peripheral stalk is formed by the delta and b chains.

It localises to the cell inner membrane. In terms of biological role, key component of the proton channel; it plays a direct role in the translocation of protons across the membrane. The polypeptide is ATP synthase subunit a (Pseudomonas syringae pv. syringae (strain B728a)).